A 781-amino-acid polypeptide reads, in one-letter code: Potassium transporter 5 (781 aa).

The segment covering 1–11 (MTEPLHTSSNG) has biased composition (polar residues). The tract at residues 1–24 (MTEPLHTSSNGGAERGPNAAFESE) is disordered. The Cytoplasmic segment spans residues 1–63 (MTEPLHTSSN…AKVGWATTLH (63 aa)). A helical membrane pass occupies residues 64–84 (LAFQSIGVVYGDMGTSPLYVF). The Extracellular segment spans residues 85-100 (SSTFTNGIKDTNDILG). A helical transmembrane segment spans residues 101 to 121 (VMSLIIYTVVLLPLIKYCFIV). Residues 122-187 (LRANDNGDGG…EKMENSPNFK (66 aa)) lie on the Cytoplasmic side of the membrane. A helical membrane pass occupies residues 188 to 208 (IILFLVTILATSMVIGDGVLT). Topologically, residues 209–225 (PCISVLSAVGGIKESAK) are extracellular. Residues 226–246 (SLTQGQIAGIAIAILIVLFLV) form a helical membrane-spanning segment. The Cytoplasmic portion of the chain corresponds to 247–257 (QRFGTDKVGYS). A helical transmembrane segment spans residues 258-278 (FGPIILTWFIFIAGTGVYNLF). Over 279 to 304 (KHDTGVLKAFNPKYIVDYFERNGKQG) the chain is Extracellular. Residues 305–325 (WISLGGVILCITGTEAMFADL) form a helical membrane-spanning segment. Topologically, residues 326-334 (GHFNVRAIQ) are cytoplasmic. A helical transmembrane segment spans residues 335–355 (IGFSVVLLPSVLLAYIGQAAY). Topologically, residues 356 to 381 (LRIYPEHVADTFYKSIPDPLYWPTFV) are extracellular. A helical transmembrane segment spans residues 382 to 402 (VAVAAAIIASQAMISGAFAII). Residues 403–426 (AQSQILGCFPRVRVIHTSTKFHGQ) lie on the Cytoplasmic side of the membrane. Residues 427-447 (VYIPEINYVLMVLCVAVTAIF) form a helical membrane-spanning segment. Residues 448-458 (QTTDKIGNAYG) are Extracellular-facing. The chain crosses the membrane as a helical span at residues 459–479 (IAVVFVMFITTLLVTLVMVMI). Over 480–481 (WK) the chain is Cytoplasmic. Residues 482 to 502 (TSLLWIALFPVIFGGAELIYL) form a helical membrane-spanning segment. The Extracellular portion of the chain corresponds to 503–512 (SSAFYKFTQG). A helical membrane pass occupies residues 513–533 (GYLPLVFSAILMFIMATWHYV). Residues 534–781 (HVHRYKYELR…LLRVGMTYEI (248 aa)) are Cytoplasmic-facing. Residues 681–707 (VTDPTSEVQDAMSSRNNSDQHTTEPRN) are disordered. The segment covering 683–700 (DPTSEVQDAMSSRNNSDQ) has biased composition (polar residues).

The protein belongs to the HAK/KUP transporter (TC 2.A.72.3) family. As to expression, expressed in root epidermis, parenchyma of stele tissue and primordial of the lateral root, root-shoot junctions and leaf sheaths. Expressed in germinated embryonic tissue, young tillers, flower organs and pedicels.

It localises to the cell membrane. The catalysed reaction is K(+)(in) = K(+)(out). In terms of biological role, high-affinity potassium transporter. Its potassium transporter activity does not seem to be affected by high sodium and low potassium concentrations in the extracellular environment. Invloved in salt stress tolerance by enhancing root potassium uptake and translocation to the shoot to prevent sodium influx during salt stress. Involved in the positive regulation of disease resistance against the rice grassy stunt virus by promoting potassium transport and increasing endogenous plant potassium. The polypeptide is Potassium transporter 5 (HAK5) (Oryza sativa subsp. japonica (Rice)).